Here is a 522-residue protein sequence, read N- to C-terminus: Cyclic GMP-AMP synthase (522 aa).

Positions 1–144 (MQPWHGKAMQ…PPGPWDVPSP (144 aa)) are disordered. DNA-binding regions lie at residues 1–160 (MQPW…DAAP) and 173–215 (KLSR…GSYY). An N6-acetyllysine modification is found at Lys7. Ser13 is subject to Phosphoserine. Lys21 is subject to N6-acetyllysine. Ser37 carries the phosphoserine modification. N6-acetyllysine is present on residues Lys47, Lys50, Lys56, Lys62, and Lys63. Ser64 is subject to Phosphoserine. Residues 64–73 (SAPDTQERPP) show a composition bias toward basic and acidic residues. The segment at 64–75 (SAPDTQERPPVR) is required for association with the cell membrane. Phosphothreonine is present on Thr68. N6-acetyllysine occurs at positions 82 and 83. Residues 88–97 (AQDTQPSDAT) are compositionally biased toward polar residues. Thr91 carries the post-translational modification Phosphothreonine. 3 positions are modified to phosphoserine: Ser98, Ser116, and Ser129. Over residues 98–118 (SAPGAEGLEPPAAREPALSRA) the composition is skewed to low complexity. The tract at residues 120-160 (SCRQRGARCSTKPRPPPGPWDVPSPGLPVSAPILVRRDAAP) is required for activation upon DNA viral infection. Lys131 carries the post-translational modification N6-lactoyllysine. Pro residues predominate over residues 132–144 (PRPPPGPWDVPSP). At Ser143 the chain carries Phosphoserine. The Nuclear export signal signature appears at 169–174 (LEKLKL). Lys173 participates in a covalent cross-link: Glycyl lysine isopeptide (Lys-Gly) (interchain with G-Cter in ubiquitin). Residue Asp191 is modified to PolyADP-ribosyl aspartic acid. Asn210 bears the (Microbial infection) Deamidated asparagine; by herpes simplex virus 1/HHV-1 UL37 mark. Thr211 serves as a coordination point for GTP. Phosphoserine is present on Ser213. Position 213 (Ser213) interacts with ATP. At Tyr215 the chain carries Phosphotyrosine; by BLK. Mg(2+)-binding residues include Glu225 and Asp227. Residue 225–227 (EFD) participates in ATP binding. Asp227 is a binding site for 2',3'-cGAMP. Lys231 participates in a covalent cross-link: Glycyl lysine isopeptide (Lys-Gly) (interchain with G-Cter in SUMO). Residue Lys285 forms a Glycyl lysine isopeptide (Lys-Gly) (interchain with G-Cter in ubiquitin) linkage. 5-glutamyl polyglutamate is present on Glu286. The short motif at 295 to 305 (DVIMKRKRGGS) is the Nuclear localization signal element. The KRKR-loop motif lies at 299–302 (KRKR). At Ser305 the chain carries Phosphoserine; by CDK1 and PKB. Glu314 is modified (5-glutamyl glutamate). Residue Asp319 coordinates GTP. A Mg(2+)-binding site is contributed by Asp319. A 2',3'-cGAMP-binding site is contributed by Asp319. The interaction with collided ribosomes stretch occupies residues 341 to 382 (QNWLSAKVRKQLRLKPFYLVPKHAKEGNGFQEETWRLSFSHI). Lys347 is covalently cross-linked (Glycyl lysine isopeptide (Lys-Gly) (interchain with G-Cter in SUMO); alternate). Lys347 participates in a covalent cross-link: Glycyl lysine isopeptide (Lys-Gly) (interchain with G-Cter in ubiquitin); alternate. 2',3'-cGAMP-binding residues include Lys362 and Arg376. GTP is bound at residue 376–383 (RLSFSHIE). An ATP-binding site is contributed by 380 to 383 (SHIE). Residue Lys384 is modified to N6-acetyllysine. A Glycyl lysine isopeptide (Lys-Gly) (interchain with G-Cter in SUMO); alternate cross-link involves residue Lys384. Lys384 participates in a covalent cross-link: Glycyl lysine isopeptide (Lys-Gly) (interchain with G-Cter in ubiquitin); alternate. Residues 384–407 (KEILNNHGKSKTCCENKEEKCCRK) are DNA-binding. The residue at position 389 (Asn389) is a (Microbial infection) Deamidated asparagine; by herpes simplex virus 1/HHV-1 UL37. His390 is a Zn(2+) binding site. N6-acetyllysine occurs at positions 392 and 394. A Glycyl lysine isopeptide (Lys-Gly) (interchain with G-Cter in SUMO) cross-link involves residue Lys394. Residues Cys396, Cys397, and Cys404 each coordinate Zn(2+). Residues Cys404 and Cys405 are each lipidated (S-palmitoyl cysteine). Residues Lys411, Lys414, Lys427, and Lys428 each participate in a glycyl lysine isopeptide (Lys-Gly) (interchain with G-Cter in ubiquitin) cross-link. Lys414 bears the N6-acetyllysine mark. Lys414 is a binding site for ATP. The short motif at 427-429 (KKH) is the KKH-loop element. Ser434 and Ser435 each carry phosphoserine. 435 to 439 (SYHVK) provides a ligand contact to ATP. (Microbial infection) Deamidated glutamine; by herpes simplex virus 1/HHV-1 UL37 occurs at positions 451 and 454. A lipid anchor (S-palmitoyl cysteine) is attached at Cys474. Residue Lys479 forms a Glycyl lysine isopeptide (Lys-Gly) (interchain with G-Cter in SUMO); alternate linkage. Lys479 participates in a covalent cross-link: Glycyl lysine isopeptide (Lys-Gly) (interchain with G-Cter in ubiquitin); alternate. Residue Lys506 is modified to N6-methyllysine.

This sequence belongs to the mab-21 family. In terms of assembly, monomer in the absence of DNA. Homodimer in presence of dsDNA: forms a 2:2 dimer with two enzymes binding to two DNA molecules. Interacts with nucleosomes; interaction is mainly mediated via histones H2A and H2B and inactivates the nucleotidyltransferase activity by blocking DNA-binding and subsequent activation. Interacts with PQBP1 (via WW domain). Interacts with TRIM14; this interaction recruits USP14, leading to deubiquitinate and stabilize CGAS and promote type I interferon production. Interacts with ZCCHC3; promoting sensing of dsDNA by CGAS. Interacts (when not monomethylated) with (poly-ADP-ribosylated) PARP1; interaction takes place in the nucleus and prevents the formation of the PARP1-TIMELESS complex. Interacts (when monomethylated) with SGF29; interaction with SGF29 prevents interaction with PARP1. Interacts with PCBP2; preventing the formation of liquid-like droplets in which CGAS is activated. Interacts with IRGM; promoting CGAS degradation. Interacts with DDX41. (Microbial infection) Interacts with herpes virus 8/HHV-8 protein ORF52; this interaction inhibits cGAS enzymatic activity by preventing the formation of liquid-like droplets by CGAS. As to quaternary structure, (Microbial infection) Interacts with herpes simplex virus 1 protein UL37; this interaction deaminates CGAS and inhibits its activation. In terms of assembly, (Microbial infection) Interacts with vaccinia virus protein OPG067; this interaction promotes CGAS proteasomal degradation. (Microbial infection) Interacts with cytomegalovirus protein UL31; this interaction promotes dissociation of DNA from CGAS, thereby inhibiting the enzymatic activity of CGAS. As to quaternary structure, (Microbial infection) Interacts with herpes simplex virus 1 tegument protein VP22 (UL49); this interaction inhibits cGAS enzymatic activity by preventing the formation of liquid-like droplets by CGAS. In terms of assembly, (Microbial infection) Interacts with herpesvirus 3 tegument protein VP22 (ORF9); this interaction inhibits cGAS enzymatic activity by preventing the formation of liquid-like droplets by CGAS. (Microbial infection) Interacts with human cytomegalovirus proteins UL42 and UL83; these interactions result in the inhibition of cGAS-STING signaling. Mg(2+) is required as a cofactor. Mn(2+) serves as cofactor. Requires Zn(2+) as cofactor. Post-translationally, the N-terminal disordered part (1-160) is phosphorylated by AURKB during the G2-M transition, blocking CGAS liquid phase separation and preventing activation. Phosphorylation at Tyr-215 by BLK promotes cytosolic retention. Localizes into the nucleus following dephosphorylation at Tyr-215. Phosphorylation at Ser-435 activates the nucleotidyltransferase activity. Dephosphorylation at Ser-435 by PPP6C impairs its ability to bind GTP, thereby inactivating it. Phosphorylation at Thr-68 and Ser-213 by PRKDC inhibits its cyclic GMP-AMP synthase activity by impairing homodimerization and activation. Phosphorylation at Ser-305 by AKT (AKT1, AKT2 or AKT3) suppresses the nucleotidyltransferase activity. Phosphorylation at Ser-305 by CDK1 during mitosis leads to its inhibition, thereby preventing CGAS activation by self-DNA during mitosis. Dephosphorylated at Ser-305 by protein phosphatase PP1 upon mitotic exit. Ubiquitinated at Lys-414 via 'Lys-48'-linked polyubiquitin chains, leading to its SQSTM1-mediated autophagic degradation. Interaction with TRIM14 promotes recruitment of USP14, leading to deubiquitinate Lys-414 and stabilize CGAS. Ubiquitinated at Lys-173 and Lys-384 by RNF185 via 'Lys-27'-linked polyubiquitination, promoting CGAS cyclic GMP-AMP synthase activity. Monoubiquitination at Lys-347 by TRIM56 promotes oligomerization and subsequent activation. Monoubiquitination by TRIM41 promotes CGAS activation. Ubiquitination at Lys-285 and Lys-479 via 'Lys-48'-linked polyubiquitination promotes its degradation. Deubiquitination at Lys-285 by USP29 promotes its stabilization. Deubiquitinated by USP27X, promoting its stabilization. Ubiquitinated at Lys-411 via 'Lys-63'-linked polyubiquitin chains by MARCHF8, leading to the inhibition of its DNA binding ability. In cycling cells, nucleosome-bound CGAS is ubiquitinated at Lys-427 and Lys-428 via 'Lys-48'-linked polyubiquitin chains by the ECS(SPSB3) complex, leading to its degradation: ubiquitination and degradation of nuclear CGAS during G1 and G2 phases is required to promote low intranuclear CGAS abundance before the next mitotic cycle. In terms of processing, sumoylated at Lys-231 and Lys-479 by TRIM38 in uninfected cells and during the early phase of viral infection, promoting its stability by preventing ubiquitination at Lys-285 and Lys-479, and subsequent degradation. Desumoylated by SENP2 during the late phase of viral infection. Sumoylation at Lys-347, Lys-384 and Lys-394 prevents DNA-binding, oligomerization and nucleotidyltransferase activity. Desumoylation at Lys-347, Lys-384 and Lys-394 by SENP7 relieves inhibition and activates CGAS. Post-translationally, polyglutamylated by TTLL6 at Glu-286, leading to impair DNA-binding activity. Monoglutamylated at Glu-314 by TTLL4, leading to impair the nucleotidyltransferase activity. Deglutamylated by AGBL5/CCP5 and AGBL6/CCP6. Acetylation at Lys-384, Lys-394 and Lys-414 inhibits the cyclic GMP-AMP synthase activity. Deacetylated upon cytosolic DNA challenge such as viral infections. Acetylation can be mediated by aspirin (acetylsalicylate) drug, which directly acetylates CGAS. Acetylation by aspirin efficiently inhibits CGAS-mediated immune responses and is able to suppress self-DNA-induced autoimmunity. Acetylation at Lys-47, Lys-56, Lys-62 and Lys-83 by KAT5 increases the cyclic GMP-AMP synthase activity by promoting DNA-binding and subsequent activation. In terms of processing, proteolytically cleaved by apoptotic caspases during apoptosis, leading to its inactivation. The damage of the nucleus and the mitochondria during apoptosis leads to leakage of nuclear and mitochondrial DNA, which activate CGAS: cleavage and inactivation during apoptosis in required to prevent cytokine overproduction. Cleaved by CASP3 at Asp-319 during virus-induced apoptosis, thereby inactivating it and preventing cytokine overproduction. Cleaved by CASP1 at Asp-140 and Asp-157 upon DNA virus infection; the cleavage impairs cGAMP production. Also cleaved by the pyroptotic CASP4 and CASP5 during non-canonical inflammasome activation; they don't cut at the same sites than CASP1. Post-translationally, degraded via selective autophagy following interaction with IRGM. IRGM promotes CGAS recruitment to autophagosome membranes, promoting its SQSTM1/p62-dependent autophagic degradation. Poly-ADP-ribosylation at Asp-191 by PARP1 impairs DNA-binding, thereby preventing the cyclic GMP-AMP synthase activity. In terms of processing, palmitoylation at Cys-474 by ZDHHC18 impairs DNA-binding, thereby preventing the cyclic GMP-AMP synthase activity. Palmitoylation at Cys-404 and Cys-405 by ZDHHC9 promotes homodimerization and cyclic GMP-AMP synthase activity. Depalmitoylation at Cys-404 and Cys-405 by LYPLAL1 impairs homodimerization and cyclic GMP-AMP synthase activity. Post-translationally, monomethylated at Lys-506 by SETD7. Monomethylation promotes interaction with SGF29, preventing interaction between PARP1 nad SGF29. Demethylation by RIOX1 promotes interaction with PARP1, followed by PARP1 inactivation. Lactylation by AARS2 prevents ability to undergo liquid-liquid phase separation (LLPS), thereby inhibiting CGAS activation. In terms of processing, (Microbial infection) Deamidated on 'Asn-210' by herpes simplex virus 1 protein UL37. This modification significantly reduces CGAS-dependent cGAMP production and innate immune signaling induced by dsDNA. Post-translationally, (Microbial infection) Degraded by an autophagy-mediated mechanism in presence of Chikungunya virus capsid protein. Expressed in the monocytic cell line THP1.

The protein localises to the nucleus. The protein resides in the chromosome. It localises to the cell membrane. It is found in the cytoplasm. Its subcellular location is the cytosol. It carries out the reaction GTP + ATP = 2',3'-cGAMP + 2 diphosphate. It catalyses the reaction GTP + ATP = pppGp(2'-5')A + diphosphate. The catalysed reaction is pppGp(2'-5')A = 2',3'-cGAMP + diphosphate. The enzyme activity is strongly increased by double-stranded DNA (dsDNA), but not by single-stranded DNA or RNA. DNA-binding induces the formation of liquid-like droplets in which CGAS is activated. Liquid-like droplets also create a selective environment that restricts entry of negative regulators, such as TREX1 or BANF1/BAF, allowing sensing of DNA. A number of mechanisms exist to restrict its activity toward self-DNA. The nucleotidyltransferase activity is inhibited in the nucleus via its association with nucleosomes: interacts with the acidic patch of histones H2A and H2B, thereby blocking DNA-binding and subsequent activation. CGAS is also inactive when associated with mitotic chromatin. Chromatin-bound CGAS cannot be activated by exogenous DNA in mitotic cells: phosphorylation of the N-terminal disordered part by AURKB during the G2-M transition blocks CGAS liquid phase separation and activation. Activity toward self-DNA is inhibited by BANF1/BAF upon acute loss of nuclear membrane integrity: BANF1/BAF acts by outcompeting CGAS for DNA-binding, thereby preventing CGAS activation. DNA-induced activation at micronuclei is also limited by TREX1, which degrades micronuclear DNA upon nuclear envelope rupture, thereby preventing CGAS activation. CGAS can be released from nucleosomes and activated by MRE11 component of the MRN complex, which displaces CGAS from acidic-patch-mediated sequestration. Acetylation at Lys-384, Lys-394 and Lys-414 inhibits the cyclic GMP-AMP synthase activity. Inhibited by aspirin (acetylsalicylate) drug, which acetylates CGAS. Acetylation by KAT5 increases the cyclic GMP-AMP synthase activity by promoting DNA-binding and subsequent activation. Phosphorylation at Ser-305 suppresses the nucleotidyltransferase activity. Phosphorylation at Ser-435 promotes the cyclic GMP-AMP synthase activity. Phosphorylation at Thr-68 and Ser-213 inhibits its cyclic GMP-AMP synthase activity. Ubiquitination at Lys-173 and Lys-384 via 'Lys-27'-linked polyubiquitination enhances the cyclic GMP-AMP synthase activity. Monoubiquitination at Lys-347 promotes oligomerization and subsequent activation. Sumoylation at Lys-347, Lys-384 and Lys-394 prevents DNA-binding, oligomerization and nucleotidyltransferase activity. The enzyme activity is impaired by the cleavage at Asp-140 and Asp-157 produced by CASP1. In addition to DNA, also activated by collided ribosomes upon translation stress: specifically binds collided ribosomes, promoting its activation and triggering type-I interferon production. Strongly inhibited by compound PF-06928215, which is specific for human protein. Inhibited by small-molecule inhibitors with a pyridoindole tricyclic core G108, G140 and G150. Its activity is regulated as follows. (Microbial infection) Nucleotidyltransferase activity is inhibited by different herpesvirus tegument proteins (Herpes simplex virus 1 tegument protein VP22, herpes virus 8 protein ORF52 and herpesvirus 3 tegument protein VP22/ORF9). Viral tegument proteins act by disrupting liquid-like droplets in which CGAS is activated, thereby preventing CGAS activity. Its function is as follows. Nucleotidyltransferase that catalyzes the formation of cyclic GMP-AMP (2',3'-cGAMP) from ATP and GTP and plays a key role in innate immunity. Catalysis involves both the formation of a 2',5' phosphodiester linkage at the GpA step and the formation of a 3',5' phosphodiester linkage at the ApG step, producing c[G(2',5')pA(3',5')p]. Acts as a key DNA sensor: directly binds double-stranded DNA (dsDNA), inducing the formation of liquid-like droplets in which CGAS is activated, leading to synthesis of 2',3'-cGAMP, a second messenger that binds to and activates STING1, thereby triggering type-I interferon production. Preferentially recognizes and binds curved long dsDNAs of a minimal length of 40 bp. Acts as a key foreign DNA sensor, the presence of double-stranded DNA (dsDNA) in the cytoplasm being a danger signal that triggers the immune responses. Has antiviral activity by sensing the presence of dsDNA from DNA viruses in the cytoplasm. Also acts as an innate immune sensor of infection by retroviruses, such as HIV-2, by detecting the presence of reverse-transcribed DNA in the cytosol. In contrast, HIV-1 is poorly sensed by CGAS, due to its capsid that cloaks viral DNA from CGAS detection. Detection of retroviral reverse-transcribed DNA in the cytosol may be indirect and be mediated via interaction with PQBP1, which directly binds reverse-transcribed retroviral DNA. Also detects the presence of DNA from bacteria, such as M.tuberculosis. 2',3'-cGAMP can be transferred from producing cells to neighboring cells through gap junctions, leading to promote STING1 activation and convey immune response to connecting cells. 2',3'-cGAMP can also be transferred between cells by virtue of packaging within viral particles contributing to IFN-induction in newly infected cells in a cGAS-independent but STING1-dependent manner. Also senses the presence of neutrophil extracellular traps (NETs) that are translocated to the cytosol following phagocytosis, leading to synthesis of 2',3'-cGAMP. In addition to foreign DNA, can also be activated by endogenous nuclear or mitochondrial DNA. When self-DNA leaks into the cytosol during cellular stress (such as mitochondrial stress, SARS-CoV-2 infection causing severe COVID-19 disease, DNA damage, mitotic arrest or senescence), or is present in form of cytosolic micronuclei, CGAS is activated leading to a state of sterile inflammation. Acts as a regulator of cellular senescence by binding to cytosolic chromatin fragments that are present in senescent cells, leading to trigger type-I interferon production via STING1 and promote cellular senescence. Also involved in the inflammatory response to genome instability and double-stranded DNA breaks: acts by localizing to micronuclei arising from genome instability. Micronuclei, which are frequently found in cancer cells, consist of chromatin surrounded by their own nuclear membrane: following breakdown of the micronuclear envelope, a process associated with chromothripsis, CGAS binds self-DNA exposed to the cytosol, leading to 2',3'-cGAMP synthesis and subsequent activation of STING1 and type-I interferon production. Activated in response to prolonged mitotic arrest, promoting mitotic cell death. In a healthy cell, CGAS is however kept inactive even in cellular events that directly expose it to self-DNA, such as mitosis, when cGAS associates with chromatin directly after nuclear envelope breakdown or remains in the form of postmitotic persistent nuclear cGAS pools bound to chromatin. Nuclear CGAS is inactivated by chromatin via direct interaction with nucleosomes, which block CGAS from DNA binding and thus prevent CGAS-induced autoimmunity. Also acts as a suppressor of DNA repair in response to DNA damage: inhibits homologous recombination repair by interacting with PARP1, the CGAS-PARP1 interaction leading to impede the formation of the PARP1-TIMELESS complex. In addition to DNA, also sense translation stress: in response to translation stress, translocates to the cytosol and associates with collided ribosomes, promoting its activation and triggering type-I interferon production. In contrast to other mammals, human CGAS displays species-specific mechanisms of DNA recognition and produces less 2',3'-cGAMP, allowing a more fine-tuned response to pathogens. This chain is Cyclic GMP-AMP synthase, found in Homo sapiens (Human).